The following is a 181-amino-acid chain: Inner membrane-spanning protein YciB (181 aa).

The next 5 membrane-spanning stretches (helical) occupy residues 3–23 (LLFD…FGIY), 54–74 (SLAI…PWFI), 81–101 (IYWL…KPLI), 119–139 (LNLA…YVAY), and 149–169 (FKLF…AFYL).

Belongs to the YciB family.

Its subcellular location is the cell inner membrane. Plays a role in cell envelope biogenesis, maintenance of cell envelope integrity and membrane homeostasis. This is Inner membrane-spanning protein YciB from Legionella pneumophila subsp. pneumophila (strain Philadelphia 1 / ATCC 33152 / DSM 7513).